Reading from the N-terminus, the 101-residue chain is Small ribosomal subunit protein bS18c (101 aa).

The protein belongs to the bacterial ribosomal protein bS18 family. Component of the chloroplast small ribosomal subunit (SSU). Mature 70S chloroplast ribosomes of higher plants consist of a small (30S) and a large (50S) subunit. The 30S small subunit contains 1 molecule of ribosomal RNA (16S rRNA) and 24 different proteins. The 50S large subunit contains 3 rRNA molecules (23S, 5S and 4.5S rRNA) and 33 different proteins.

It is found in the plastid. Its subcellular location is the chloroplast. In terms of biological role, component of the chloroplast ribosome (chloro-ribosome), a dedicated translation machinery responsible for the synthesis of chloroplast genome-encoded proteins, including proteins of the transcription and translation machinery and components of the photosynthetic apparatus. The chain is Small ribosomal subunit protein bS18c (RPS18) from Spinacia oleracea (Spinach).